A 574-amino-acid polypeptide reads, in one-letter code: Pentatricopeptide repeat-containing protein At5g25630 (574 aa).

The span at 1–21 (MEDVNQEKKKVPPMSEPERST) shows a compositional bias: basic and acidic residues. The interval 1–25 (MEDVNQEKKKVPPMSEPERSTPIKT) is disordered. PPR repeat units follow at residues 44-78 (TVRS…GHRP), 79-113 (SLIS…GTKL), 114-148 (DSIF…GLNP), 149-183 (TTST…GNVD), 187-221 (NIRT…GVRP), 222-258 (DTVT…KAKP), 259-293 (NGRT…RVEA), 294-328 (NLVV…NVKA), 329-363 (DVIT…GVKP), 364-394 (DAHA…LIVE), 398-432 (NVVI…GVSP), and 433-467 (NIKT…GVKP).

The protein belongs to the PPR family. P subfamily.

The chain is Pentatricopeptide repeat-containing protein At5g25630 from Arabidopsis thaliana (Mouse-ear cress).